We begin with the raw amino-acid sequence, 144 residues long: Maximins 6/Hv (144 aa).

An N-terminal signal peptide occupies residues 1–18 (MNFKYIVAVSFLIASGYA). Positions 19–43 (RSEENDVQSLSQREVLEEETLREIR) are excised as a propeptide. Asparagine amide is present on Asn-70. Positions 74–123 (TAKGHEVMKRLEAVMRDLDSLDHPEEASERETRGFNQEEIANLFTKKEKR) are excised as a propeptide. The residue at position 143 (Ile-143) is an Isoleucine amide.

The protein belongs to the bombinin family. In terms of tissue distribution, expressed by the skin glands.

The protein localises to the secreted. Functionally, shows antimicrobial activity against bacteria and against the fungus C.albicans. It has little hemolytic activity. In terms of biological role, shows antimicrobial activity against bacteria and against the fungus C.albicans. Shows strong hemolytic activity. This is Maximins 6/Hv from Bombina maxima (Giant fire-bellied toad).